A 2474-amino-acid polypeptide reads, in one-letter code: Highly reducing polyketide synthase 40 (2474 aa).

The Ketosynthase family 3 (KS3) domain maps to 1 to 294; that stretch reads MFKETEIQQR…GSNAHIIIDD (294 aa). Active-site for beta-ketoacyl synthase activity residues include Cys-42, His-177, and His-217. The 340-residue stretch at 459 to 798 folds into the Malonyl-CoA:ACP transacylase (MAT) domain; that stretch reads FVFTGQGAQW…GYESVLRRGT (340 aa). An N-terminal hotdog fold region spans residues 864 to 998; that stretch reads HELLGAPVPD…GLVVTEYEQP (135 aa). The region spanning 864-1182 is the PKS/mFAS DH domain; it reads HELLGAPVPD…ITTVARSEGA (319 aa). His-896 serves as the catalytic Proton acceptor; for dehydratase activity. Residues 1027 to 1182 form a C-terminal hotdog fold region; sequence KVETSFRQLY…ITTVARSEGA (156 aa). Asp-1093 acts as the Proton donor; for dehydratase activity in catalysis. Residues 1232-1535 form a methyltransferase (CMet) domain region; the sequence is VEMMCFLYIK…DLHIYDFPDH (304 aa). The 294-residue stretch at 1770 to 2063 folds into the Enoyl reductase (ER) domain; sequence GLLDSLQFQD…SGSHMGKLVL (294 aa). The region spanning 2087–2263 is the Ketoreductase (KR) domain; it reads ASYLLSGGLG…PGVAVDLGMI (177 aa). Residues 2385 to 2462 form the Carrier domain; it reads DAAKIVSAAI…ELAELAAKRS (78 aa). An O-(pantetheine 4'-phosphoryl)serine modification is found at Ser-2422.

It depends on pantetheine 4'-phosphate as a cofactor.

The protein operates within secondary metabolite biosynthesis. Functionally, highly reducing polyketide synthase; part of the gene cluster that mediates the biosynthesis of the gamma-pyrones fusapyrone (FPY) and deoxyfusapyrone (dFPY). FPY is an undecaketide and thus likely synthesized by the polyketide synthase FPY1 from acetyl-CoA functioning as starter unit and the addition of 10 malonyl-CoA extender units by successive Claisen-condensations. Next to this, FPY shares some rare features: C-glycosylated 4-deoxyglucose at C-3, a gem-dimethyl group at C-13, and an alpha-beta to beta-gamma double bond shift at C-20. During FPY biosynthesis mono-C-methyl groups are transferred to the tetra-, penta-, hexa- and heptaketide, while two C-methyl groups are transferred to the nonaketide, suggesting that the CMet domain is programmed to selectively catalyze two successive C-alpha-methylation reactions of the nonaketide, while other alpha-carbons are non- or mono-methylated only. While the origin of the 4'-deoxyglucose moiety remains opaque, its transfer to C-3 is most likely mediated by the C-glycosyltransferase FPY2. Next to this, the hydroxyl group present at C-33 and discriminating between FPY and dFPY, is likely to be installed by the cytochrome P450 monooxygenase FPY7. No putative function can be predicted for the remaining genes FPY3-FPY6. This Fusarium mangiferae (Mango malformation disease fungus) protein is Highly reducing polyketide synthase 40.